The primary structure comprises 688 residues: PTS system glucoside-specific EIICBA component (688 aa).

Positions 3–427 (KKLFGQLQRI…FKLKTPGRED (425 aa)) constitute a PTS EIIC type-1 domain. A run of 10 helical transmembrane segments spans residues 12–32 (IGKALMLPVAILPAAGILLAF), 81–101 (LGLAGGDGVAALAALVGYLIM), 137–157 (LVLGIPTLQTGVFGGIIMGAL), 182–202 (FVPIVTSVVAIATGVLLSFAW), 223–243 (LTTFIFGIIERSLIPFGLHHI), 284–304 (AFTTGKYPFMMFGLPAAAFAI), 315–335 (VVGGLMLSAGLTAFLTGITEP), 340–360 (FLFVAPVLYGIHVLLAGTSFL), 364–384 (LLGVKIGMTFSGGFIDYILYG), and 395–415 (LVIPVGIVYAIVYYFLFDFAI). Positions 438–519 (AKLPFDVLDA…AKIMSGEITK (82 aa)) constitute a PTS EIIB type-1 domain. Cysteine 460 serves as the catalytic Phosphocysteine intermediate; for EIIB activity. Residues 560–664 (DQVFAGKMMG…SIVTPMIITN (105 aa)) enclose the PTS EIIA type-1 domain. Residue histidine 612 is the Tele-phosphohistidine intermediate; for EIIA activity of the active site.

It is found in the cell membrane. The phosphoenolpyruvate-dependent sugar phosphotransferase system (sugar PTS), a major carbohydrate active -transport system, catalyzes the phosphorylation of incoming sugar substrates concomitantly with their translocation across the cell membrane. This system is involved in alpha- and beta-glucoside transport. This Staphylococcus aureus (strain JH1) protein is PTS system glucoside-specific EIICBA component (glcB).